Consider the following 316-residue polypeptide: MSTVQVPKLNTKDLLTLEELTQEEIISLIEFAIYLKKNKQEPLLQGKILGLIFDKHSTRTRVSFEAGMVQLGGHGMFLNGKEMQMGRGETVSDTAKVLSHYIDGIMIRTFSHADVEELAKESSIPVINGLTDDHHPCQALADLMTIYEETNTFKGIKLAYVGDGNNVCHSLLLASAKVGMHMTVATPVGYKPNEEIVKKALAIAKETGAEIEILHNPELAVNEADFIYTDVWMSMGQEGEEEKYTLFQPYQINKELVKHAKQTYHFLHCLPAHREEEVTGEIIDGPQSIVFEQAGNRLHAQKALLVSLFKNVEELS.

Residues 57 to 60, Gln-84, Arg-108, and 135 to 138 each bind carbamoyl phosphate; these read STRT and HPCQ. Residues Asn-166, Asp-230, and 234-235 contribute to the L-ornithine site; that span reads SM. Carbamoyl phosphate-binding positions include 269 to 270 and Arg-297; that span reads CL.

The protein belongs to the aspartate/ornithine carbamoyltransferase superfamily. OTCase family.

It localises to the cytoplasm. It carries out the reaction carbamoyl phosphate + L-ornithine = L-citrulline + phosphate + H(+). The protein operates within amino-acid degradation; L-arginine degradation via ADI pathway; carbamoyl phosphate from L-arginine: step 2/2. In terms of biological role, reversibly catalyzes the transfer of the carbamoyl group from carbamoyl phosphate (CP) to the N(epsilon) atom of ornithine (ORN) to produce L-citrulline. The protein is Ornithine carbamoyltransferase of Bacillus anthracis (strain CDC 684 / NRRL 3495).